Reading from the N-terminus, the 344-residue chain is UPF0283 membrane protein YcjF (344 aa).

Transmembrane regions (helical) follow at residues 70-90 (MVMGGLALFGASVVGQGVQWT), 100-120 (VALGGCAAGALIIGAGVGSVV), and 213-233 (ESTLMIAVSPLALVDMAFIAW).

It belongs to the UPF0283 family.

The protein localises to the cell inner membrane. The sequence is that of UPF0283 membrane protein YcjF from Shigella dysenteriae serotype 1 (strain Sd197).